A 668-amino-acid polypeptide reads, in one-letter code: Golgin candidate 2 (668 aa).

A disordered region spans residues 22–317 (QAADSLRKDE…RQREERRRRR (296 aa)). Residues 26–39 (SLRKDEKSETHDEV) show a composition bias toward basic and acidic residues. Polar residues-rich tracts occupy residues 64–86 (GSDS…LSSS) and 100–113 (SAPS…NTKL). Low complexity-rich tracts occupy residues 123–141 (STPN…GGTS) and 168–178 (SSSSNVVNSRG). Basic and acidic residues-rich tracts occupy residues 184–207 (TNKE…RNAP), 215–237 (THKE…RRSA), and 250–259 (GKRDGRESRR). The span at 290–302 (DESESDYESDSST) shows a compositional bias: acidic residues. Basic and acidic residues predominate over residues 303-312 (DSERERQREE). Residues 331 to 539 (AVIKERENMV…SQVEALSSEK (209 aa)) adopt a coiled-coil conformation. The next 2 helical transmembrane spans lie at 594-614 (KHLG…TVFL) and 622-642 (IWAV…LLSH).

Its subcellular location is the golgi apparatus membrane. In terms of biological role, golgi matrix protein playing a role in tethering of vesicles to Golgi membranes and in maintaining the overall structure of the Golgi apparatus. In Arabidopsis thaliana (Mouse-ear cress), this protein is Golgin candidate 2 (GC2).